A 316-amino-acid polypeptide reads, in one-letter code: Protoheme IX farnesyltransferase (316 aa).

The next 9 membrane-spanning stretches (helical) occupy residues 34 to 54, 55 to 75, 95 to 115, 118 to 138, 155 to 175, 182 to 202, 228 to 250, 254 to 273, and 287 to 307; these read VMSLVVFTAFAGLVLAPGHIN, PFIGFTAILCIAIGAGASGAL, IPAGKILPQEALAFGLTLSAF, IILGLAVHWLAAGLLAFTIFF, IVIGGAAGAFPPMIGWACVTG, IVLFLIIFLWTPAHFWALALF, IVIYAVLTAVSGVCPTLLGFASL, AFATVMGLGFVWYSLGVLRM, and FAFSIAYLFAIFSALLVDYAI.

Belongs to the UbiA prenyltransferase family. Protoheme IX farnesyltransferase subfamily.

The protein localises to the cell inner membrane. The catalysed reaction is heme b + (2E,6E)-farnesyl diphosphate + H2O = Fe(II)-heme o + diphosphate. Its pathway is porphyrin-containing compound metabolism; heme O biosynthesis; heme O from protoheme: step 1/1. Functionally, converts heme B (protoheme IX) to heme O by substitution of the vinyl group on carbon 2 of heme B porphyrin ring with a hydroxyethyl farnesyl side group. The chain is Protoheme IX farnesyltransferase from Rhizobium meliloti (strain 1021) (Ensifer meliloti).